The primary structure comprises 396 residues: Elongation factor Tu (396 aa).

Residues 10–206 enclose the tr-type G domain; sequence KPHVNVGTIG…ALDSYIPTPE (197 aa). A G1 region spans residues 19-26; it reads GHVDHGKT. Position 19–26 (19–26) interacts with GTP; sequence GHVDHGKT. A Mg(2+)-binding site is contributed by T26. The tract at residues 60–64 is G2; the sequence is GITIN. A G3 region spans residues 81–84; that stretch reads DCPG. GTP-binding positions include 81 to 85 and 136 to 139; these read DCPGH and NKCD. A G4 region spans residues 136-139; sequence NKCD. Residues 174 to 176 are G5; that stretch reads SAL.

Belongs to the TRAFAC class translation factor GTPase superfamily. Classic translation factor GTPase family. EF-Tu/EF-1A subfamily. In terms of assembly, monomer.

The protein localises to the cytoplasm. It carries out the reaction GTP + H2O = GDP + phosphate + H(+). Functionally, GTP hydrolase that promotes the GTP-dependent binding of aminoacyl-tRNA to the A-site of ribosomes during protein biosynthesis. The sequence is that of Elongation factor Tu from Aromatoleum aromaticum (strain DSM 19018 / LMG 30748 / EbN1) (Azoarcus sp. (strain EbN1)).